The following is a 134-amino-acid chain: Small ribosomal subunit protein uS12 (134 aa).

A 3-methylthioaspartic acid modification is found at Asp-89. The interval Lys-109–Lys-134 is disordered. A compositionally biased stretch (basic residues) spans Asn-111–Lys-123. Residues Ala-124 to Lys-134 show a composition bias toward low complexity.

Belongs to the universal ribosomal protein uS12 family. In terms of assembly, part of the 30S ribosomal subunit. Contacts proteins S8 and S17. May interact with IF1 in the 30S initiation complex.

Its function is as follows. With S4 and S5 plays an important role in translational accuracy. In terms of biological role, interacts with and stabilizes bases of the 16S rRNA that are involved in tRNA selection in the A site and with the mRNA backbone. Located at the interface of the 30S and 50S subunits, it traverses the body of the 30S subunit contacting proteins on the other side and probably holding the rRNA structure together. The combined cluster of proteins S8, S12 and S17 appears to hold together the shoulder and platform of the 30S subunit. The protein is Small ribosomal subunit protein uS12 of Wolinella succinogenes (strain ATCC 29543 / DSM 1740 / CCUG 13145 / JCM 31913 / LMG 7466 / NCTC 11488 / FDC 602W) (Vibrio succinogenes).